Reading from the N-terminus, the 429-residue chain is D-amino acid dehydrogenase (429 aa).

3–17 (VLILGSGVIGVTSAW) lines the FAD pocket.

It belongs to the DadA oxidoreductase family. FAD serves as cofactor.

It carries out the reaction a D-alpha-amino acid + A + H2O = a 2-oxocarboxylate + AH2 + NH4(+). Functionally, oxidative deamination of D-amino acids. This Xanthomonas axonopodis pv. citri (strain 306) protein is D-amino acid dehydrogenase.